We begin with the raw amino-acid sequence, 196 residues long: Recombination protein RecR (196 aa).

The C4-type zinc-finger motif lies at 56 to 71 (CPVCGGLDSQQPCMIC). The 95-residue stretch at 78–172 (PLICVVETVA…SVTRLAQGVP (95 aa)) folds into the Toprim domain.

Belongs to the RecR family.

Functionally, may play a role in DNA repair. It seems to be involved in an RecBC-independent recombinational process of DNA repair. It may act with RecF and RecO. This chain is Recombination protein RecR, found in Acidiphilium cryptum (strain JF-5).